Consider the following 156-residue polypeptide: MRRFLFLSLGVLVVAFSLNGIGADHHCPWDWFSFDRFCYKVIKQRKNWQDAERFCGQLQNGSHLASIQSWAESKYVAMLLSNNAFLDTVWIGLFEPEKNRSLEWSDGSGFCYTGWERRKRNNVDNKKYCVELSWMSDYLEWNNVKCESRNIFICKI.

The signal sequence occupies residues 1–23 (MRRFLFLSLGVLVVAFSLNGIGA). 3 disulfides stabilise this stretch: Cys-27/Cys-38, Cys-55/Cys-154, and Cys-129/Cys-146. A C-type lectin domain is found at 34-155 (FDRFCYKVIK…CESRNIFICK (122 aa)). Residues Asn-60 and Asn-99 are each glycosylated (N-linked (GlcNAc...) asparagine). The Sugar-binding signature appears at 119 to 121 (KRN). Asn-142 serves as a coordination point for Ca(2+).

The protein belongs to the true venom lectin family. As to expression, expressed by the venom gland.

Its subcellular location is the secreted. Its function is as follows. Lectin which recognizes specific carbohydrate structures and agglutinates a variety of animal cells by binding to cell-surface glycoproteins and glycolipids. May be a calcium-dependent lectin. This Leioheterodon madagascariensis (Malagasy giant hognose snake) protein is C-type lectin lectoxin-Lei1.